A 146-amino-acid polypeptide reads, in one-letter code: Large ribosomal subunit protein uL11 (146 aa).

This sequence belongs to the universal ribosomal protein uL11 family. In terms of assembly, part of the ribosomal stalk of the 50S ribosomal subunit. Interacts with L10 and the large rRNA to form the base of the stalk. L10 forms an elongated spine to which L12 dimers bind in a sequential fashion forming a multimeric L10(L12)X complex. Post-translationally, one or more lysine residues are methylated.

Functionally, forms part of the ribosomal stalk which helps the ribosome interact with GTP-bound translation factors. This Blochmanniella floridana protein is Large ribosomal subunit protein uL11.